The chain runs to 636 residues: MAKIHELSENLTNQIAAGEVIERPASVVKELVENSLDAGATRIRVDFIDAGLKQIVVQDNGTGIARDQVDLAFTRHATSKISNEHDLFKVSTLGFRGEALASISAVSHVEIVTATENAIGIKADFSGGSKKGQEDAASQKGTKITVRDLFFNTPARLKYLRSPRTEIMKIVDIINRLSLGYPHVSFTLSNTGKVLFRTTGNGNLKQTVANVYGRHIAEKMESFEAKDSDFKITGLMSKPELTRSTRNFISILLNGRYIKNFQLNNAIMDGYGSKLAARHYPIVVITIHVDPMLVDVNVHPTKQEVRLSKEKELSRLITDAISDALLDKTEQSSGFANLENKRETLVDQLEFNLNQDVVNTTRKTPEVHEEAEKPEFLVKQEAKNSEEPKNETEHNYVDINIPREDDQYIITKTWDKNVALQQKLMPFSNKKVDQEVISTGDETLANNLPRLAYVGKIDTYLLAENDGDLYLIDQVAARRRLQFEQIYQTITSKKIVQQGLLTPIVLEFGNLDFLQIKDKIYQIKQLGIYLDEFGQNSFIVRSYPTWIHDHVEESIREILDNYLNLDKGKTQNLFKRVAALEAKRSVKGKINLSAAEGTQIITDLRKTSDPYHDADGRLILVRISQNELRKMFKKGE.

The disordered stretch occupies residues 362 to 393; the sequence is RKTPEVHEEAEKPEFLVKQEAKNSEEPKNETE. The span at 363-393 shows a compositional bias: basic and acidic residues; that stretch reads KTPEVHEEAEKPEFLVKQEAKNSEEPKNETE.

It belongs to the DNA mismatch repair MutL/HexB family.

Functionally, this protein is involved in the repair of mismatches in DNA. It is required for dam-dependent methyl-directed DNA mismatch repair. May act as a 'molecular matchmaker', a protein that promotes the formation of a stable complex between two or more DNA-binding proteins in an ATP-dependent manner without itself being part of a final effector complex. The protein is DNA mismatch repair protein MutL of Lactobacillus helveticus (strain DPC 4571).